Reading from the N-terminus, the 78-residue chain is Large ribosomal subunit protein bL31 (78 aa).

Residues C16, C18, C38, and C41 each contribute to the Zn(2+) site.

This sequence belongs to the bacterial ribosomal protein bL31 family. Type A subfamily. Part of the 50S ribosomal subunit. Requires Zn(2+) as cofactor.

Binds the 23S rRNA. The polypeptide is Large ribosomal subunit protein bL31 (Frankia alni (strain DSM 45986 / CECT 9034 / ACN14a)).